Here is a 276-residue protein sequence, read N- to C-terminus: uncharacterized protein (276 aa).

Helical transmembrane passes span 5 to 25 (IVLA…KYSV), 31 to 51 (IAIA…IIIL), 63 to 83 (VFAL…LGEV), 89 to 109 (VASV…AIFL), 119 to 139 (VGII…YANI), 142 to 162 (IALV…GKSL), 168 to 188 (PITL…PFLP), 200 to 220 (LIGS…LGWY), 231 to 251 (ASVF…ILLA), and 253 to 273 (PLTL…YIVV). EamA domains are found at residues 12 to 133 (TFWG…VISE) and 150 to 274 (VAAA…IVVR).

It belongs to the EamA transporter family.

It is found in the cell membrane. This is an uncharacterized protein from Archaeoglobus fulgidus (strain ATCC 49558 / DSM 4304 / JCM 9628 / NBRC 100126 / VC-16).